The chain runs to 464 residues: F-box/FBD/LRR-repeat protein At1g80470 (464 aa).

Residues 15–62 (DWISGLADDLLLQILSKVPTRESVFTSRMSKRWRNLWRHVPALDLDSS) form the F-box domain. LRR repeat units lie at residues 96–122 (EEHC…TILS), 123–150 (KVNI…TLYS), 152–178 (VFDA…KFDG), 197–222 (IITH…KLES), 223–249 (MRED…SITD), and 273–298 (DAED…TISA). An FBD domain is found at 359–413 (KEEINLSLVPHCFESSLEYVQLKVPITVSETSSKMELAIYFVRNCSVLKKLMLNE).

The protein is F-box/FBD/LRR-repeat protein At1g80470 of Arabidopsis thaliana (Mouse-ear cress).